The sequence spans 138 residues: Nucleoside diphosphate kinase (138 aa).

Residues K9, F57, R85, T91, R102, and N112 each coordinate ATP. Residue H115 is the Pros-phosphohistidine intermediate of the active site.

This sequence belongs to the NDK family. As to quaternary structure, homotetramer. The cofactor is Mg(2+).

Its subcellular location is the cytoplasm. It carries out the reaction a 2'-deoxyribonucleoside 5'-diphosphate + ATP = a 2'-deoxyribonucleoside 5'-triphosphate + ADP. The enzyme catalyses a ribonucleoside 5'-diphosphate + ATP = a ribonucleoside 5'-triphosphate + ADP. Major role in the synthesis of nucleoside triphosphates other than ATP. The ATP gamma phosphate is transferred to the NDP beta phosphate via a ping-pong mechanism, using a phosphorylated active-site intermediate. The protein is Nucleoside diphosphate kinase of Deinococcus geothermalis (strain DSM 11300 / CIP 105573 / AG-3a).